A 344-amino-acid chain; its full sequence is MGHLPPPAEVRHPVYATRVLCEVANERGVPTADVLAGTAIEPADLDDPDAVVGALDEITAVRRLLARLPDDAGIGIDVGSRFALTHFGLFGFAVMSCGTLRELLTIAMRYFALTTMHVDITLFETADDCLVELDASHLPADVRGFFIERDIAGIIATTTSFALPLAAKYADQVSAELAVDAELLRPLLELVPVHDVAFGRAHNRVHFPRAMFDEPLPQADRHTLEMCIAQCDVLMQRNERRRGITALVRSKLFRDSGLFPTFTDVAGELDMHPRTLRRRLAEEGTSFRALLGEARSTVAVDLLRNVGLTVQQVSTRLGYTEVSTFSHAFKRWYGVAPSEYSRRG.

Residues 242 to 343 form the HTH araC/xylS-type domain; it reads RGITALVRSK…GVAPSEYSRR (102 aa). 2 consecutive DNA-binding regions (H-T-H motif) follow at residues 263–284 and 310–333; these read TDVA…AEEG and VQQV…KRWY.

This is an uncharacterized protein from Mycobacterium bovis (strain ATCC BAA-935 / AF2122/97).